Reading from the N-terminus, the 139-residue chain is Gene 22 protein (139 aa).

In Mycobacterium phage D29 (Mycobacteriophage D29), this protein is Gene 22 protein (22).